Reading from the N-terminus, the 107-residue chain is Pyrimidine/purine nucleoside phosphorylase (107 aa).

It belongs to the nucleoside phosphorylase PpnP family.

The enzyme catalyses a purine D-ribonucleoside + phosphate = a purine nucleobase + alpha-D-ribose 1-phosphate. It carries out the reaction adenosine + phosphate = alpha-D-ribose 1-phosphate + adenine. It catalyses the reaction cytidine + phosphate = cytosine + alpha-D-ribose 1-phosphate. The catalysed reaction is guanosine + phosphate = alpha-D-ribose 1-phosphate + guanine. The enzyme catalyses inosine + phosphate = alpha-D-ribose 1-phosphate + hypoxanthine. It carries out the reaction thymidine + phosphate = 2-deoxy-alpha-D-ribose 1-phosphate + thymine. It catalyses the reaction uridine + phosphate = alpha-D-ribose 1-phosphate + uracil. The catalysed reaction is xanthosine + phosphate = alpha-D-ribose 1-phosphate + xanthine. Catalyzes the phosphorolysis of diverse nucleosides, yielding D-ribose 1-phosphate and the respective free bases. Can use uridine, adenosine, guanosine, cytidine, thymidine, inosine and xanthosine as substrates. Also catalyzes the reverse reactions. This Azoarcus sp. (strain BH72) protein is Pyrimidine/purine nucleoside phosphorylase.